We begin with the raw amino-acid sequence, 322 residues long: MTSPSTIKQKFIAKGHQLGVVAVGFSDGQPNQGVDPSGLIEAGLLDQLRDDLEYDIRHDGKVHTYAEFVPEHDPNHRGMKKPRTVSAATQQLSRQVYEHAREGRLVLTLGGDHSIAIGTISGTAKAIRERLGREMAVIWVDAHADINRPEDSDSGNIHGMPLAFLTGLAKDDNEDMFGWLQPDNLISPRKLVYIGLRDVDRAEKRLLKEHGIKAFSMHDIDKYGIGRVVEMALAHIGQDTPIHLSFDVDALDPQWAPSTGTPVRGGLTLREGDFIAESIHETGSLVAMDLVEVNPTLETLGASETIRAGCSLVRSALGDTLL.

Mn(2+)-binding residues include His-113, Asp-141, His-143, and Asp-145. Residues 143–147 (HADIN), 154–156 (SGN), and Asp-200 each bind substrate. Mn(2+) contacts are provided by Asp-247 and Asp-249. 2 residues coordinate substrate: Thr-261 and Glu-292.

It belongs to the arginase family. Homotrimer. The cofactor is Mn(2+).

The catalysed reaction is L-arginine + H2O = urea + L-ornithine. Its pathway is nitrogen metabolism; urea cycle; L-ornithine and urea from L-arginine: step 1/1. The polypeptide is Arginase (ARG) (Coccidioides immitis (strain RS) (Valley fever fungus)).